The sequence spans 108 residues: UPF0102 protein Sama_3355 (108 aa).

This sequence belongs to the UPF0102 family.

The sequence is that of UPF0102 protein Sama_3355 from Shewanella amazonensis (strain ATCC BAA-1098 / SB2B).